The chain runs to 546 residues: Sulfite oxidase, mitochondrial (546 aa).

Residues 1–80 (MLPRLYRSVA…YHDHRCRASQ (80 aa)) constitute a mitochondrion transit peptide. Residues 83 to 162 (PRIYSKEDVR…LAEYKIGELN (80 aa)) form the Cytochrome b5 heme-binding domain. Position 119 (H119) interacts with heme b. Position 124 is a phosphoserine (S124). Heme b is bound by residues H144, Q146, and H148. The segment at 166–175 (RMSPPLEASD) is hinge. The tract at residues 176-402 (PYSNDPMRHP…YSHWQRRDYK (227 aa)) is moco domain. Mo-molybdopterin is bound by residues 216 to 220 (FTRNH), C265, D323, H362, R367, and 378 to 380 (HVK). A homodimerization region spans residues 403-539 (GFSPSVDWDT…RGVLSNAWHR (137 aa)).

Homodimer. Heme b is required as a cofactor. Mo-molybdopterin serves as cofactor.

The protein localises to the mitochondrion intermembrane space. The enzyme catalyses sulfite + O2 + H2O = sulfate + H2O2. It functions in the pathway energy metabolism; sulfur metabolism. In terms of biological role, catalyzes the oxidation of sulfite to sulfate, the terminal reaction in the oxidative degradation of sulfur-containing amino acids. This is Sulfite oxidase, mitochondrial from Rattus norvegicus (Rat).